Reading from the N-terminus, the 20-residue chain is Peroxidase 1 (20 aa).

Heme is bound at residue histidine 14. Threonine 15 is a Ca(2+) binding site.

Belongs to the peroxidase family. Classical plant (class III) peroxidase subfamily. Ca(2+) serves as cofactor. Heme b is required as a cofactor.

Its subcellular location is the secreted. It catalyses the reaction 2 a phenolic donor + H2O2 = 2 a phenolic radical donor + 2 H2O. Its function is as follows. Removal of H(2)O(2), oxidation of toxic reductants, biosynthesis and degradation of lignin, suberization, auxin catabolism, response to environmental stresses such as wounding, pathogen attack and oxidative stress. These functions might be dependent on each isozyme/isoform in each plant tissue. The sequence is that of Peroxidase 1 from Betula pendula (European white birch).